The sequence spans 345 residues: Phenylalanine--tRNA ligase alpha subunit (345 aa).

Glu-255 serves as a coordination point for Mg(2+).

This sequence belongs to the class-II aminoacyl-tRNA synthetase family. Phe-tRNA synthetase alpha subunit type 1 subfamily. Tetramer of two alpha and two beta subunits. The cofactor is Mg(2+).

The protein resides in the cytoplasm. The enzyme catalyses tRNA(Phe) + L-phenylalanine + ATP = L-phenylalanyl-tRNA(Phe) + AMP + diphosphate + H(+). This Lysinibacillus sphaericus (strain C3-41) protein is Phenylalanine--tRNA ligase alpha subunit.